Here is a 148-residue protein sequence, read N- to C-terminus: Large ribosomal subunit protein bL9 (148 aa).

This sequence belongs to the bacterial ribosomal protein bL9 family.

In terms of biological role, binds to the 23S rRNA. The protein is Large ribosomal subunit protein bL9 of Geobacter sulfurreducens (strain ATCC 51573 / DSM 12127 / PCA).